Here is a 310-residue protein sequence, read N- to C-terminus: p-hydroxybenzoic acid efflux pump subunit AaeA (310 aa).

Residues 12–32 form a helical membrane-spanning segment; sequence AITVVLVILAFIAIFNAWVYY.

Belongs to the membrane fusion protein (MFP) (TC 8.A.1) family.

It is found in the cell inner membrane. Its function is as follows. Forms an efflux pump with AaeB. This is p-hydroxybenzoic acid efflux pump subunit AaeA from Shigella sonnei (strain Ss046).